Reading from the N-terminus, the 258-residue chain is Tryptophan synthase alpha chain (258 aa).

Residues Glu-52 and Asp-63 each act as proton acceptor in the active site.

This sequence belongs to the TrpA family. As to quaternary structure, tetramer of two alpha and two beta chains.

The catalysed reaction is (1S,2R)-1-C-(indol-3-yl)glycerol 3-phosphate + L-serine = D-glyceraldehyde 3-phosphate + L-tryptophan + H2O. The protein operates within amino-acid biosynthesis; L-tryptophan biosynthesis; L-tryptophan from chorismate: step 5/5. Its function is as follows. The alpha subunit is responsible for the aldol cleavage of indoleglycerol phosphate to indole and glyceraldehyde 3-phosphate. This is Tryptophan synthase alpha chain from Streptococcus pneumoniae serotype 2 (strain D39 / NCTC 7466).